The sequence spans 373 residues: Protein CAF40 (373 aa).

The disordered stretch occupies residues 1 to 91; the sequence is MFSAQKPIYG…ANATRNNPNM (91 aa). Residues 11–22 show a composition bias toward gly residues; sequence NGAGVNMGGGGP. Over residues 50–88 the composition is skewed to low complexity; sequence GGPMLMGNTPNNNNSNENGENNGNNGNNGGNDANATRNN.

This sequence belongs to the CNOT9 family. As to quaternary structure, subunit of the 1.0 MDa CCR4-NOT core complex that contains CCR4, CAF1, NOT1, NOT2, NOT3, NOT4, NOT5, CAF40 and CAF130. In the complex interacts with NOT1. The core complex probably is part of a less characterized 1.9 MDa CCR4-NOT complex.

It is found in the cytoplasm. The protein resides in the nucleus. Acts as a component of the CCR4-NOT core complex, which in the nucleus seems to be a general transcription factor, and in the cytoplasm the major mRNA deadenylase involved in mRNA turnover. This is Protein CAF40 (CAF40) from Saccharomyces cerevisiae (strain ATCC 204508 / S288c) (Baker's yeast).